The sequence spans 264 residues: Phosphonoacetaldehyde hydrolase (264 aa).

Asp9 serves as the catalytic Nucleophile. Mg(2+) contacts are provided by Asp9 and Ala11. The active-site Schiff-base intermediate with substrate is the Lys50. A Mg(2+)-binding site is contributed by Asp183.

The protein belongs to the HAD-like hydrolase superfamily. PhnX family. In terms of assembly, homodimer. Requires Mg(2+) as cofactor.

It catalyses the reaction phosphonoacetaldehyde + H2O = acetaldehyde + phosphate + H(+). In terms of biological role, involved in phosphonate degradation. The polypeptide is Phosphonoacetaldehyde hydrolase (Bacillus cereus (strain B4264)).